We begin with the raw amino-acid sequence, 681 residues long: Serine/threonine-protein kinase PAK 6 (681 aa).

4 disordered regions span residues Met1–Glu30, Gly149–Leu169, Gln200–Leu256, and Thr268–Trp355. Positions Ile12–Ser25 constitute a CRIB domain. The interval Phe26–Leu406 is linker. Low complexity-rich tracts occupy residues Ser201–Thr212 and Thr268–Lys278. Residues Ser308 to Leu333 are compositionally biased toward polar residues. The region spanning Leu407 to Leu658 is the Protein kinase domain. ATP-binding positions include Ile413–Val421 and Lys436. Asp526 (proton acceptor) is an active-site residue. Ser560 carries the post-translational modification Phosphoserine; by autocatalysis.

Belongs to the protein kinase superfamily. STE Ser/Thr protein kinase family. STE20 subfamily. In terms of assembly, interacts tightly with GTP-bound but not GDP-bound CDC42/p21 and RAC1. Interacts with the androgen receptor AR and the estrogen receptor ESR1. Interacts with IQGAP1 and PPM1B. Post-translationally, autophosphorylated. Phosphorylated by MAP2K6//MAPKK6, leading to PAK6 activation. In terms of tissue distribution, selectively expressed in brain and testis, with lower levels in multiple tissues including prostate and breast.

The protein resides in the cytoplasm. Its subcellular location is the nucleus. The enzyme catalyses L-seryl-[protein] + ATP = O-phospho-L-seryl-[protein] + ADP + H(+). It carries out the reaction L-threonyl-[protein] + ATP = O-phospho-L-threonyl-[protein] + ADP + H(+). In terms of biological role, serine/threonine protein kinase that plays a role in the regulation of gene transcription. The kinase activity is induced by various effectors including AR or MAP2K6/MAPKK6. Phosphorylates the DNA-binding domain of androgen receptor/AR and thereby inhibits AR-mediated transcription. Also inhibits ESR1-mediated transcription. May play a role in cytoskeleton regulation by interacting with IQGAP1. May protect cells from apoptosis through phosphorylation of BAD. This chain is Serine/threonine-protein kinase PAK 6 (PAK6), found in Homo sapiens (Human).